The following is a 131-amino-acid chain: UPF0102 protein Ent638_3585 (131 aa).

The tract at residues 1–20 (MAQIPAGADRPGKLSRKQTG) is disordered.

It belongs to the UPF0102 family.

In Enterobacter sp. (strain 638), this protein is UPF0102 protein Ent638_3585.